We begin with the raw amino-acid sequence, 123 residues long: Histone H2B (123 aa).

Positions 1 to 32 are disordered; the sequence is MPPKAASKGAKKAASKAKAARSTDKKKRRRRR. The span at 9–32 shows a compositional bias: basic residues; it reads GAKKAASKAKAARSTDKKKRRRRR. O-linked (GlcNAc) serine glycosylation is present at serine 110. Lysine 118 participates in a covalent cross-link: Glycyl lysine isopeptide (Lys-Gly) (interchain with G-Cter in ubiquitin).

Belongs to the histone H2B family. The nucleosome is a histone octamer containing two molecules each of H2A, H2B, H3 and H4 assembled in one H3-H4 heterotetramer and two H2A-H2B heterodimers. The octamer wraps approximately 147 bp of DNA. Monoubiquitination of Lys-118 gives a specific tag for epigenetic transcriptional activation and is also prerequisite for histone H3 'Lys-4' and 'Lys-79' methylation.

Its subcellular location is the nucleus. It localises to the chromosome. Functionally, core component of nucleosome. Nucleosomes wrap and compact DNA into chromatin, limiting DNA accessibility to the cellular machineries which require DNA as a template. Histones thereby play a central role in transcription regulation, DNA repair, DNA replication and chromosomal stability. DNA accessibility is regulated via a complex set of post-translational modifications of histones, also called histone code, and nucleosome remodeling. This chain is Histone H2B, found in Urechis caupo (Innkeeper worm).